Consider the following 474-residue polypeptide: PTS system MurNAc-GlcNAc-specific EIIBC component (474 aa).

Positions 5 to 87 (ERLAKDITHA…ADQSGATLAE (83 aa)) constitute a PTS EIIB type-1 domain. Residue Cys-27 is the Phosphocysteine intermediate; for EIIB activity of the active site. One can recognise a PTS EIIC type-1 domain in the interval 124–474 (KSIANIFIPL…GTTKEMRNPE (351 aa)). Helical transmembrane passes span 129 to 149 (IFIP…IAAI), 167 to 187 (IVTV…IFTG), 193 to 213 (VFGA…LTGI), 228 to 248 (LAAG…LSMV), 268 to 288 (ITLL…AGFV), 299 to 319 (IIGV…LPLV), 343 to 363 (LLPI…ALWV), 378 to 398 (ALPV…TLPL), 402 to 422 (FFTA…IGHI), and 444 to 464 (LGYI…TYFF).

It is found in the cell membrane. It catalyses the reaction N-acetyl-beta-D-muramate-(1-&gt;4)-N-acetyl-D-glucosamine(out) + N(pros)-phospho-L-histidyl-[protein] = 6-phospho-N-acetyl-beta-D-muramate-(1-&gt;4)-N-acetyl-D-glucosamine(in) + L-histidyl-[protein]. The protein operates within cell wall biogenesis; peptidoglycan recycling. Functionally, the phosphoenolpyruvate-dependent sugar phosphotransferase system (sugar PTS), a major carbohydrate active transport system, catalyzes the phosphorylation of incoming sugar substrates concomitantly with their translocation across the cell membrane. This system is involved in the uptake and phosphorylation of MurNAc-GlcNAc, the principle peptidoglycan turnover product of S.aureus, yielding cytoplasmic MurNAc 6P-GlcNAc. In Staphylococcus epidermidis (strain ATCC 35984 / DSM 28319 / BCRC 17069 / CCUG 31568 / BM 3577 / RP62A), this protein is PTS system MurNAc-GlcNAc-specific EIIBC component.